Reading from the N-terminus, the 860-residue chain is Translation initiation factor IF-2 (860 aa).

Positions 1 to 11 (MSDTKSGDDKT) are enriched in basic and acidic residues. The disordered stretch occupies residues 1-265 (MSDTKSGDDK…MRRRQEKFKR (265 aa)). Positions 79 to 88 (AAPVVQEAPK) are enriched in low complexity. Over residues 110–183 (SRSEMEARRR…RRRAEEEARR (74 aa)) the composition is skewed to basic and acidic residues. In terms of domain architecture, tr-type G spans 358-525 (PRPPVVTIMG…AILLQAEILD (168 aa)). The interval 367-374 (GHVDHGKT) is G1. GTP is bound at residue 367-374 (GHVDHGKT). Positions 392-396 (GITQH) are G2. Positions 413-416 (DTPG) are G3. GTP-binding positions include 413-417 (DTPGH) and 467-470 (NKID). Residues 467-470 (NKID) form a G4 region. The interval 503–505 (SAT) is G5.

The protein belongs to the TRAFAC class translation factor GTPase superfamily. Classic translation factor GTPase family. IF-2 subfamily.

The protein resides in the cytoplasm. Functionally, one of the essential components for the initiation of protein synthesis. Protects formylmethionyl-tRNA from spontaneous hydrolysis and promotes its binding to the 30S ribosomal subunits. Also involved in the hydrolysis of GTP during the formation of the 70S ribosomal complex. The chain is Translation initiation factor IF-2 from Mesorhizobium japonicum (strain LMG 29417 / CECT 9101 / MAFF 303099) (Mesorhizobium loti (strain MAFF 303099)).